The primary structure comprises 483 residues: Teichuronic acid biosynthesis protein TuaB (483 aa).

The next 11 helical transmembrane spans lie at 15-34 (TSISTMCITIIQIVQFALLG), 41-63 (EFGLVGMITTVTVFAQIVLDMGF), 83-105 (WLNIMTGVLLFVLLYVSSPVIAG), 112-134 (LVFLVRILAIMFLIAPIGQQYQY), 154-176 (VLSFGYLAIAVFMMDAILAYVIS), 294-316 (LALVSFPLLIGLVSVSDAFITAV), 321-343 (WLAAVPILNVLAIVGILRVLMNP), 356-378 (LAFYWDSGVLLLYGLSLFAAVQT), 382-404 (LTVAWVYAIISVVNFLIGRWLLA), 411-433 (LSAYFQSIMKPFLITAAMGIIAF), and 448-470 (MRLAISVAAGALCYLFLLVKAYP).

It belongs to the polysaccharide synthase family.

The protein localises to the cell membrane. It functions in the pathway cell wall biogenesis; teichuronic acid biosynthesis. Its function is as follows. Might be involved in the translocation of teichuronic acid repeating units from the inner to the outer surface of the membrane. The chain is Teichuronic acid biosynthesis protein TuaB (tuaB) from Bacillus subtilis (strain 168).